A 791-amino-acid chain; its full sequence is Ataxin-1 (791 aa).

Residues 1-30 (MKSNQERSNECLPPKKREIPATSRPSEEKA) show a composition bias toward basic and acidic residues. The tract at residues 1-36 (MKSNQERSNECLPPKKREIPATSRPSEEKATALPSD) is disordered. Lysine 16 is covalently cross-linked (Glycyl lysine isopeptide (Lys-Gly) (interchain with G-Cter in SUMO)). Residues serine 81 and serine 87 each carry the phosphoserine modification. Disordered regions lie at residues 187–240 (SQAP…TSPP) and 298–402 (EVLN…HRSY). Residue lysine 193 forms a Glycyl lysine isopeptide (Lys-Gly) (interchain with G-Cter in SUMO) linkage. Serine 213 is subject to Phosphoserine. Residue threonine 218 is modified to Phosphothreonine. Composition is skewed to polar residues over residues 219–236 (QQNQ…SGRA), 312–327 (ASSS…SSKS), and 362–388 (PNSS…TLND). Serine 229 is modified (phosphoserine). The segment at 470–580 (VGSPDMDTPG…TEDFIQSAEI (111 aa)) is self-association. Residues 514-791 (LVTQAAYPAM…CIEGRSNVGK (278 aa)) form an interaction with USP7 region. Residues 516–742 (TQAAYPAMVQ…FLSKIEPSKP (227 aa)) are RNA-binding. Residues 538-669 (SPTTASPTLP…SLTLKNLKNG (132 aa)) enclose the AXH domain. Residues lysine 585, lysine 672, and lysine 721 each participate in a glycyl lysine isopeptide (Lys-Gly) (interchain with G-Cter in SUMO) cross-link. Positions 736–774 (KIEPSKPTATRKRRWSAPETRKLEKSEDEPPLTLPKPSL) are disordered. A Phosphoserine modification is found at serine 751. The short motif at 770 to 773 (PKPS) is the Nuclear localization signal element.

This sequence belongs to the ATXN1 family. As to quaternary structure, homooligomer. Interacts with PQBP1, UBQLN4 and USP7. Interacts with ANP32A. Interacts with CIC. Directly interacts with RBPJ; this interaction is disrupted in the presence of Notch intracellular domain. Interacts with ATXN1L; competes with ATXN1L for RBPJ-binding. Found in a complex with CIC and ATXN1L. Ubiquitinated by UBE3A, leading to its degradation by the proteasome. The presence of poly-Gln repeats in trangenic models developed to replicate phenotypes of the spinocerebellar ataxia 1 disease (SCA1) impair ubiquitination and degradation, leading to accumulation of Atxn1 in neurons and subsequent toxicity. Post-translationally, sumoylation is dependent on nuclear localization and phosphorylation at Ser-751. Expressed in the cortex and hypothalamus (at protein level). Widely expressed. In brain, the pattern of distribution is limited to neuron populations.

The protein localises to the cytoplasm. It is found in the nucleus. Chromatin-binding factor that repress Notch signaling in the absence of Notch intracellular domain by acting as a CBF1 corepressor. Binds to the HEY promoter and might assist, along with NCOR2, RBPJ-mediated repression. May be involved in RNA metabolism. In concert with CIC and ATXN1L, involved in brain development. This is Ataxin-1 (Atxn1) from Mus musculus (Mouse).